Reading from the N-terminus, the 124-residue chain is Putative melanoma-associated antigen 5P (124 aa).

Residues 1-14 show a composition bias toward basic and acidic residues; that stretch reads MSLEQKSQHCKPEE. Disordered stretches follow at residues 1–69 and 82–103; these read MSLE…QGAS and QSIKGSSNQEEEGPSTSPDPES. In terms of domain architecture, MAGE spans 3-124; it reads LEQKSQHCKP…DLIHFLLLKY (122 aa). Composition is skewed to polar residues over residues 30 to 44 and 82 to 100; these read AATTEEQEAVSSSSP and QSIKGSSNQEEEGPSTSPD.

Expressed in many tumors of several types, such as melanoma, head and neck squamous cell carcinoma, lung carcinoma and breast carcinoma, but not in normal tissues except for testes.

Functionally, may negatively regulates apoptosis. The sequence is that of Putative melanoma-associated antigen 5P from Homo sapiens (Human).